The chain runs to 148 residues: ATP synthase epsilon chain (148 aa).

It belongs to the ATPase epsilon chain family. F-type ATPases have 2 components, CF(1) - the catalytic core - and CF(0) - the membrane proton channel. CF(1) has five subunits: alpha(3), beta(3), gamma(1), delta(1), epsilon(1). CF(0) has three main subunits: a, b and c.

It is found in the cell inner membrane. Produces ATP from ADP in the presence of a proton gradient across the membrane. This Paracoccus denitrificans (strain Pd 1222) protein is ATP synthase epsilon chain.